The following is a 91-amino-acid chain: Probable Fe(2+)-trafficking protein (91 aa).

This sequence belongs to the Fe(2+)-trafficking protein family. Monomer.

Its function is as follows. Could be a mediator in iron transactions between iron acquisition and iron-requiring processes, such as synthesis and/or repair of Fe-S clusters in biosynthetic enzymes. This Klebsiella pneumoniae subsp. pneumoniae (strain ATCC 700721 / MGH 78578) protein is Probable Fe(2+)-trafficking protein.